Consider the following 416-residue polypeptide: Serine hydroxymethyltransferase (416 aa).

Residues Leu-121 and 125 to 127 contribute to the (6S)-5,6,7,8-tetrahydrofolate site; that span reads GHL. Lys-229 carries the N6-(pyridoxal phosphate)lysine modification.

Belongs to the SHMT family. As to quaternary structure, homodimer. Pyridoxal 5'-phosphate serves as cofactor.

The protein resides in the cytoplasm. It catalyses the reaction (6R)-5,10-methylene-5,6,7,8-tetrahydrofolate + glycine + H2O = (6S)-5,6,7,8-tetrahydrofolate + L-serine. The protein operates within one-carbon metabolism; tetrahydrofolate interconversion. It participates in amino-acid biosynthesis; glycine biosynthesis; glycine from L-serine: step 1/1. Its function is as follows. Catalyzes the reversible interconversion of serine and glycine with tetrahydrofolate (THF) serving as the one-carbon carrier. This reaction serves as the major source of one-carbon groups required for the biosynthesis of purines, thymidylate, methionine, and other important biomolecules. Also exhibits THF-independent aldolase activity toward beta-hydroxyamino acids, producing glycine and aldehydes, via a retro-aldol mechanism. The protein is Serine hydroxymethyltransferase of Neisseria meningitidis serogroup B (strain ATCC BAA-335 / MC58).